A 462-amino-acid polypeptide reads, in one-letter code: CD-NTase-associated protein 4 (462 aa).

The interval 1-226 is N-terminal endonuclease domain; it reads MSASLLEKQS…FENFICHALE (226 aa). Catalysis depends on residues Asp50, Glu67, and Lys69. Residue Asp50 coordinates Mg(2+). A C-terminal SAVED domain region spans residues 235–462; the sequence is DPIKINLSAS…QYIPTAELNL (228 aa). 2',3',3'-c-tri-AMP-binding positions include 299 to 301, Trp449, and Tyr454; that span reads KQR.

Belongs to the Cap4 nuclease family. As to quaternary structure, a monomer in the absence of ligand, in its presence it forms oligomers. Requires a divalent metal cation as cofactor.

Its activity is regulated as follows. DNase activity is activated upon ligand binding. Inhibited by EDTA. Effector DNase of a CBASS antivirus system. CBASS (cyclic oligonucleotide-based antiphage signaling system) provides immunity against bacteriophage. The CD-NTase protein synthesizes cyclic nucleotides in response to infection; these serve as specific second messenger signals. The signals activate a diverse range of effectors, leading to bacterial cell death and thus abortive phage infection. A type II-C(AAAA) CBASS system. Functionally, binds cyclic nucleotide second messengers (synthesized by CdnD, the cognate CD-NTase in the CBASS operon). Ligand binding activates it to endonucleolytically degrade dsDNA to approximately 6 bp length fragments, with a preference for 5'-C or 5'-G cleavage site. The minor product of CdnD is the activating nucleotide; also binds the major product (2',3',3'-cyclic AMP-AMP-AMP) but is not activated by it. Only binds DNA in the presence of ligand. Is not activated by c-di-AMP, c-di-GMP, 3'3'-cyclic GMP-AMP (3'3'-cGAMP) or 3',3',3'-cyclic AMP-AMP-GMP. The sequence is that of CD-NTase-associated protein 4 from Acinetobacter sp. (strain ATCC 27244 / 9458).